We begin with the raw amino-acid sequence, 421 residues long: Zinc metalloproteinase-disintegrin-like lachestatin-2 (421 aa).

A Peptidase M12B domain is found at K10–P206. Disulfide bonds link C121-C201, C161-C185, and C163-C168. A Zn(2+)-binding site is contributed by H146. The active site involves E147. Zn(2+)-binding residues include H150 and H156. One can recognise a Disintegrin domain in the interval P214–N299. V216, N219, F221, E223, E226, and D229 together coordinate Ca(2+). 14 disulfides stabilise this stretch: C217/C246, C228/C241, C230/C236, C240/C263, C254/C260, C259/C285, C272/C292, C279/C310, C303/C315, C322/C372, C337/C383, C350/C360, C367/C409, and C403/C414. Positions E278–D280 match the D/ECD-tripeptide motif. Ca(2+) is bound by residues D280, M281, D283, D294, and R295. N312 carries N-linked (GlcNAc...) asparagine glycosylation.

This sequence belongs to the venom metalloproteinase (M12B) family. P-III subfamily. P-IIIc sub-subfamily. As to quaternary structure, homodimer; disulfide-linked. Requires Zn(2+) as cofactor. As to expression, expressed by the venom gland.

The protein localises to the secreted. Snake venom zinc metalloprotease that induces apoptosis in vascular endothelial cells (VEC), without degrading the extracellular matrix (it cannot cleave collagen) or inhibiting adhesion of VEC. Has also fibrinogenolytic and hemorrhagic activities. The polypeptide is Zinc metalloproteinase-disintegrin-like lachestatin-2 (Lachesis muta rhombeata (Bushmaster)).